We begin with the raw amino-acid sequence, 853 residues long: Probable inorganic carbon transporter subunit DabA (853 aa).

The disordered stretch occupies residues 1 to 21 (MSHANSEETMMNTAVAHPSTS). A compositionally biased stretch (polar residues) spans 7-21 (EETMMNTAVAHPSTS). 4 residues coordinate Zn(2+): Cys-364, Asp-366, His-546, and Cys-561.

Belongs to the inorganic carbon transporter (TC 9.A.2) DabA family. In terms of assembly, forms a complex with DabB. It depends on Zn(2+) as a cofactor.

The protein localises to the cell inner membrane. In terms of biological role, part of an energy-coupled inorganic carbon pump. The protein is Probable inorganic carbon transporter subunit DabA of Methylovorus glucosotrophus (strain SIP3-4).